The sequence spans 116 residues: MKYFVVALTLAVAFVCIEECKTVEIGYAVSEDFDQNEIDNEEARQAFKTFTPDWNKIRNDAKRMQDNLEQMKKRFNLNLEEARQAFQTFKPDWNKIRYDAMKMQTSLGQMKKRFNL.

An N-terminal signal peptide occupies residues Met1 to Thr22. 2 consecutive propeptides follow at residues Val23–Arg44 and Glu80–Arg83. 2 short sequence motifs (processing quadruplet motif) span residues Glu41–Arg44 and Glu80–Arg83. A Pyrrolidone carboxylic acid modification is found at Gln84.

This sequence belongs to the cationic peptide 03 (latarcin) family. 06 subfamily. Post-translationally, cleavage of the propeptide depends on the processing quadruplet motif (XXXR, with at least one of X being E). In terms of tissue distribution, expressed by the venom gland.

It is found in the secreted. Its function is as follows. Does not have antimicrobial activity against neither Gram-positive bacteria (A.globiformis VKM Ac-1112 (MIC&gt;70 uM), and B.subtilis VKM B-501 (MIC&gt;70 uM)), nor Gram-negative bacteria (E.coli DH5-alpha (MIC&gt;70 uM), E.coli MH1 (MIC&gt;70 uM), and P.aeruginosa PAO1 (MIC&gt;70 uM)), nor yeasts (P.pastoris GS115 (MIC&gt;70 uM), and S.cerevisiae Y190 (MIC&gt;70 uM)). Does not have hemolytic activity against rabbit erythrocytes. However, it causes some conductance changes in planar bilayer membranes, without membrane rupture, suggesting a cytolytic function on other biological targets. It causes paralysis, but is not lethal when injected into insect (M.domestica) larvae. The protein is M-zodatoxin-Lt6a/b of Lachesana tarabaevi (Spider).